The sequence spans 391 residues: Polyketide synthase 3 (391 aa).

Residue Cys164 is part of the active site.

This sequence belongs to the thiolase-like superfamily. Chalcone/stilbene synthases family. Homodimer.

It catalyses the reaction (E)-4-coumaroyl-CoA + 3 malonyl-CoA + 3 H(+) = 2',4,4',6'-tetrahydroxychalcone + 3 CO2 + 4 CoA. It participates in secondary metabolite biosynthesis; flavonoid biosynthesis. In terms of biological role, polyketide synthase producing p-coumaryltriacetic acid lactone (CTAL) and slightly naringenin chalcone. Can use p-coumaryl-CoA as substrate. This Rubus idaeus (Raspberry) protein is Polyketide synthase 3 (PKS3).